The sequence spans 230 residues: Extracellular ribonuclease LE (230 aa).

A signal peptide spans 1-25 (MASNSAFSLFLILLIITQCLSVLNA). RNA is bound at residue Gln37. Intrachain disulfides connect Cys43/Cys49, Cys50/Cys106, Cys79/Cys125, Cys186/Cys221, and Cys202/Cys213. Residues His64, Phe114, 117-118 (HE), and 121-122 (KH) contribute to the RNA site. His64 (proton donor) is an active-site residue. The active site involves Glu118. His122 acts as the Proton acceptor in catalysis.

Belongs to the RNase T2 family.

The protein resides in the secreted. It localises to the extracellular space. The protein localises to the cell wall. The catalysed reaction is a ribonucleotidyl-ribonucleotide-RNA + H2O = a 3'-end 3'-phospho-ribonucleotide-RNA + a 5'-end dephospho-ribonucleoside-RNA + H(+). Probably involved in plant phosphate-starvation rescue system. The sequence is that of Extracellular ribonuclease LE from Solanum lycopersicum (Tomato).